We begin with the raw amino-acid sequence, 561 residues long: DISARM protein DrmB (561 aa).

It is found in the cytoplasm. In terms of biological role, component of antiviral defense system DISARM (defense island system associated with restriction-modification), composed of DrmE, DrmA, DrmB, DrmC and DrmMII. DISARM is probably a multi-gene restriction module, this subunit has an unknown function. Expression of DISARM in B.subtilis (strain BEST7003) confers resistance to phages Nf, phi29, phi105, phi3T, SPO1, SPR and SPP1. Protection is over 10(7)-fold against phi3T, 10(4)-10(5)-fold against Nf, phi29, phi105 and SPR, 100-fold against SPO1 and 10-fold against SPP1. DISARM does not interfere with phage adsorption, but instead interferes with (phi3T) DNA replication early in its cycle, preventing replication, circularization and lysogeny and probably causes phage DNA degradation (DNA is degraded in SPP1-infected cells). The sequence is that of DISARM protein DrmB from Bacillus paralicheniformis (strain ATCC 9945a / NCIMB 11709 / CD-2).